The sequence spans 432 residues: D-amino acid dehydrogenase (432 aa).

Residue 3–17 coordinates FAD; that stretch reads VVILGSGVVGVTSAW.

It belongs to the DadA oxidoreductase family. FAD is required as a cofactor.

The catalysed reaction is a D-alpha-amino acid + A + H2O = a 2-oxocarboxylate + AH2 + NH4(+). Its pathway is amino-acid degradation; D-alanine degradation; NH(3) and pyruvate from D-alanine: step 1/1. Oxidative deamination of D-amino acids. The polypeptide is D-amino acid dehydrogenase (Salmonella agona (strain SL483)).